A 156-amino-acid chain; its full sequence is ATP synthase subunit b (156 aa).

The helical transmembrane segment at 12–32 threads the bilayer; the sequence is VAFLIFVLFCMKFVWPPVIAA.

The protein belongs to the ATPase B chain family. F-type ATPases have 2 components, F(1) - the catalytic core - and F(0) - the membrane proton channel. F(1) has five subunits: alpha(3), beta(3), gamma(1), delta(1), epsilon(1). F(0) has three main subunits: a(1), b(2) and c(10-14). The alpha and beta chains form an alternating ring which encloses part of the gamma chain. F(1) is attached to F(0) by a central stalk formed by the gamma and epsilon chains, while a peripheral stalk is formed by the delta and b chains.

It localises to the cell inner membrane. Functionally, f(1)F(0) ATP synthase produces ATP from ADP in the presence of a proton or sodium gradient. F-type ATPases consist of two structural domains, F(1) containing the extramembraneous catalytic core and F(0) containing the membrane proton channel, linked together by a central stalk and a peripheral stalk. During catalysis, ATP synthesis in the catalytic domain of F(1) is coupled via a rotary mechanism of the central stalk subunits to proton translocation. Its function is as follows. Component of the F(0) channel, it forms part of the peripheral stalk, linking F(1) to F(0). This is ATP synthase subunit b from Pseudomonas fluorescens (strain Pf0-1).